Reading from the N-terminus, the 560-residue chain is Leucine-rich repeat and IQ domain-containing protein 4 (560 aa).

The disordered stretch occupies residues 1–20 (MSKDIKSVEHSPKIHQRNDP). 20 LRR repeats span residues 23–47 (VNDR…IFTF), 48–70 (TELE…IQRL), 72–95 (NIRV…LLSS), 97–116 (ESLD…VVSF), 117–140 (LHAL…IFKN), 141–164 (LHHL…IVNQ), 166–187 (KLRE…LCVL), 188–210 (YTLE…IGHL), 212–233 (GLQK…LCQC), 234–256 (SQLS…FAEL), 258–281 (KMTE…RWTS), 283–301 (HLLY…SFRC), 302–325 (LVNL…ICAL), 326–348 (KNLE…LGSL), 350–371 (KLKI…VLSL), 374–397 (LEKL…IRKL), 398–422 (QSLK…SMPN), 424–443 (EVLD…ICQA), 444–466 (QALK…LDSL), and 468–489 (NLKV…VCAE). The 30-residue stretch at 504–533 (RNIMATKIQAWWRGTMVQRGFGKFGELLKP) folds into the IQ domain. The segment at 529–560 (ELLKPQKKGKTSPKDKKGKKDVKGKPGKGKKK) is disordered. The span at 533 to 560 (PQKKGKTSPKDKKGKKDVKGKPGKGKKK) shows a compositional bias: basic residues.

In Homo sapiens (Human), this protein is Leucine-rich repeat and IQ domain-containing protein 4 (LRRIQ4).